The chain runs to 478 residues: Cytochrome c-552 (478 aa).

The first 26 residues, 1-26 (MTRIKINARRIFSLLIPFFFFTSVHA), serve as a signal peptide directing secretion. Histidine 94 provides a ligand contact to heme c. Heme contacts are provided by cysteine 122, cysteine 125, and lysine 126. Residues cysteine 160, cysteine 163, histidine 164, cysteine 209, cysteine 212, and histidine 213 each contribute to the heme c site. Glutamate 215, tyrosine 216, lysine 261, and glutamine 263 together coordinate Ca(2+). Tyrosine 216 contributes to the substrate binding site. Position 264 (histidine 264) interacts with substrate. The heme c site is built by histidine 275, cysteine 282, cysteine 285, histidine 286, histidine 301, cysteine 314, cysteine 317, histidine 318, and histidine 393.

Belongs to the cytochrome c-552 family. Ca(2+) serves as cofactor. The cofactor is heme c.

It localises to the periplasm. The catalysed reaction is 6 Fe(III)-[cytochrome c] + NH4(+) + 2 H2O = 6 Fe(II)-[cytochrome c] + nitrite + 8 H(+). It participates in nitrogen metabolism; nitrate reduction (assimilation). In terms of biological role, catalyzes the reduction of nitrite to ammonia, consuming six electrons in the process. This Escherichia coli O157:H7 (strain EC4115 / EHEC) protein is Cytochrome c-552.